The sequence spans 343 residues: Holliday junction branch migration complex subunit RuvB (343 aa).

A disordered region spans residues 1 to 26 (MKEKILTFSSDPSSPVTRHETEEDTG). Positions 3 to 193 (EKILTFSSDP…FGIFRKFDFY (191 aa)) are large ATPase domain (RuvB-L). The segment covering 7–16 (TFSSDPSSPV) has biased composition (polar residues). ATP contacts are provided by residues Leu32, Arg33, Gly74, Lys77, Thr78, Thr79, 140–142 (EDF), Arg183, Tyr193, and Arg230. Thr78 lines the Mg(2+) pocket. The segment at 194 to 264 (SRQDLARIVS…AIDDALALEG (71 aa)) is small ATPAse domain (RuvB-S). Residues 267–343 (EKGLTGLDRS…YRHLGVQWRG (77 aa)) form a head domain (RuvB-H) region. Residues Arg322 and Arg327 each coordinate DNA.

It belongs to the RuvB family. As to quaternary structure, homohexamer. Forms an RuvA(8)-RuvB(12)-Holliday junction (HJ) complex. HJ DNA is sandwiched between 2 RuvA tetramers; dsDNA enters through RuvA and exits via RuvB. An RuvB hexamer assembles on each DNA strand where it exits the tetramer. Each RuvB hexamer is contacted by two RuvA subunits (via domain III) on 2 adjacent RuvB subunits; this complex drives branch migration. In the full resolvosome a probable DNA-RuvA(4)-RuvB(12)-RuvC(2) complex forms which resolves the HJ.

Its subcellular location is the cytoplasm. The enzyme catalyses ATP + H2O = ADP + phosphate + H(+). In terms of biological role, the RuvA-RuvB-RuvC complex processes Holliday junction (HJ) DNA during genetic recombination and DNA repair, while the RuvA-RuvB complex plays an important role in the rescue of blocked DNA replication forks via replication fork reversal (RFR). RuvA specifically binds to HJ cruciform DNA, conferring on it an open structure. The RuvB hexamer acts as an ATP-dependent pump, pulling dsDNA into and through the RuvAB complex. RuvB forms 2 homohexamers on either side of HJ DNA bound by 1 or 2 RuvA tetramers; 4 subunits per hexamer contact DNA at a time. Coordinated motions by a converter formed by DNA-disengaged RuvB subunits stimulates ATP hydrolysis and nucleotide exchange. Immobilization of the converter enables RuvB to convert the ATP-contained energy into a lever motion, pulling 2 nucleotides of DNA out of the RuvA tetramer per ATP hydrolyzed, thus driving DNA branch migration. The RuvB motors rotate together with the DNA substrate, which together with the progressing nucleotide cycle form the mechanistic basis for DNA recombination by continuous HJ branch migration. Branch migration allows RuvC to scan DNA until it finds its consensus sequence, where it cleaves and resolves cruciform DNA. This Desulfosudis oleivorans (strain DSM 6200 / JCM 39069 / Hxd3) (Desulfococcus oleovorans) protein is Holliday junction branch migration complex subunit RuvB.